The primary structure comprises 1140 residues: Protein FAM184A (1140 aa).

Coiled coils occupy residues 57–256 (ALNT…NKAQ), 296–800 (AILR…IEME), and 868–907 (RITDLQEELRHREHHISELDKEVQHLHENISALTKELEFK). Positions 1063-1128 (PNLSALESGG…EASPVASPDP (66 aa)) are disordered.

This sequence belongs to the FAM184 family.

It is found in the cytoplasm. The protein resides in the P-body. It localises to the cytoskeleton. The protein localises to the microtubule organizing center. Its subcellular location is the centrosome. It is found in the centriolar satellite. The chain is Protein FAM184A from Homo sapiens (Human).